We begin with the raw amino-acid sequence, 1610 residues long: Adenylate cyclase type 10 (1610 aa).

2 consecutive Guanylate cyclase domains span residues 42 to 179 and 293 to 418; these read VLMF…RLAQ and TIVF…ARMM. Mg(2+) is bound by residues Asp47 and Ile48. 47-52 contributes to the ATP binding site; it reads DISGFT. Hydrogencarbonate is bound at residue Lys95. Asp99 serves as a coordination point for Mg(2+). Residues Asp99 and Lys144 each coordinate ATP. Val167, Arg176, and Met337 together coordinate hydrogencarbonate. Residues Val406 and 412–416 contribute to the ATP site; that span reads NIAAR.

It belongs to the adenylyl cyclase class-4/guanylyl cyclase family. Requires Mg(2+) as cofactor. It depends on Mn(2+) as a cofactor.

The protein localises to the cell membrane. It localises to the cytoplasm. Its subcellular location is the cytoskeleton. The protein resides in the perinuclear region. It is found in the nucleus. The protein localises to the cell projection. It localises to the cilium. It catalyses the reaction ATP = 3',5'-cyclic AMP + diphosphate. Its activity is regulated as follows. Activated by manganese or magnesium ions. In the presence of magnesium ions, the enzyme is activated by bicarbonate. Calcium mildly increases the enzyme activity, also in the presence of magnesium ions. In terms of biological role, catalyzes the formation of the signaling molecule cAMP. May function as sensor that mediates responses to changes in cellular bicarbonate and CO(2) levels. Has a critical role in mammalian spermatogenesis by producing the cAMP which regulates cAMP-responsive nuclear factors indispensable for sperm maturation in the epididymis. Induces capacitation, the maturational process that sperm undergo prior to fertilization. Involved in ciliary beat regulation. This is Adenylate cyclase type 10 (ADCY10) from Oryctolagus cuniculus (Rabbit).